Consider the following 313-residue polypeptide: Dimethyladenosine transferase (313 aa).

Residues 1 to 22 (MPKIKSAASGRRRERQQQRGQL) are disordered. Residues histidine 37, leucine 39, glycine 64, glutamate 85, aspartate 113, and asparagine 128 each contribute to the S-adenosyl-L-methionine site.

It belongs to the class I-like SAM-binding methyltransferase superfamily. rRNA adenine N(6)-methyltransferase family. As to quaternary structure, part of the small subunit (SSU) processome, composed of more than 70 proteins and the RNA chaperone small nucleolar RNA (snoRNA) U3.

The protein resides in the nucleus. The protein localises to the nucleoplasm. Its subcellular location is the nucleolus. The catalysed reaction is adenosine(1779)/adenosine(1780) in 18S rRNA + 4 S-adenosyl-L-methionine = N(6)-dimethyladenosine(1779)/N(6)-dimethyladenosine(1780) in 18S rRNA + 4 S-adenosyl-L-homocysteine + 4 H(+). In terms of biological role, specifically dimethylates two adjacent adenosines in the loop of a conserved hairpin near the 3'-end of 18S rRNA in the 40S particle. Involved in the pre-rRNA processing steps leading to small-subunit rRNA production independently of its RNA-modifying catalytic activity. Part of the small subunit (SSU) processome, first precursor of the small eukaryotic ribosomal subunit. During the assembly of the SSU processome in the nucleolus, many ribosome biogenesis factors, an RNA chaperone and ribosomal proteins associate with the nascent pre-rRNA and work in concert to generate RNA folding, modifications, rearrangements and cleavage as well as targeted degradation of pre-ribosomal RNA by the RNA exosome. The polypeptide is Dimethyladenosine transferase (DIMT1) (Bos taurus (Bovine)).